The chain runs to 369 residues: Beta-1,4-galactosyltransferase 2 (369 aa).

Residues 1 to 15 are Cytoplasmic-facing; that stretch reads MSRLLGGTLERVCKA. The helical; Signal-anchor for type II membrane protein transmembrane segment at 16 to 36 threads the bilayer; sequence VLLLCLLHFLVAVILYFDVYA. The Lumenal portion of the chain corresponds to 37-369; the sequence is QHLAFFSRFS…GRPMSWLNQG (333 aa). Residues 59 to 75 are compositionally biased toward polar residues; sequence SSSTNCSRPNATASSSG. Positions 59–90 are disordered; it reads SSSTNCSRPNATASSSGLPEVPSARPGPTAPV. Residues N63 and N68 are each glycosylated (N-linked (GlcNAc...) asparagine). Cysteines 94 and 136 form a disulfide. UDP-alpha-D-galactose is bound by residues 147 to 151, 186 to 188, 214 to 215, and W275; these read PFRHR, FNR, and VD. A disulfide bridge links C208 with C227. D215 contacts Mn(2+). 277-280 serves as a coordination point for N-acetyl-D-glucosamine; sequence GEDD. Residue H308 participates in Mn(2+) binding. 308-310 lines the UDP-alpha-D-galactose pocket; sequence HDR. R320 contacts N-acetyl-D-glucosamine. Residue N354 is glycosylated (N-linked (GlcNAc...) asparagine).

Belongs to the glycosyltransferase 7 family. Requires Mn(2+) as cofactor.

Its subcellular location is the golgi apparatus. It localises to the golgi stack membrane. It catalyses the reaction D-glucose + UDP-alpha-D-galactose = lactose + UDP + H(+). It carries out the reaction an N-acetyl-beta-D-glucosaminyl derivative + UDP-alpha-D-galactose = a beta-D-galactosyl-(1-&gt;4)-N-acetyl-beta-D-glucosaminyl derivative + UDP + H(+). The enzyme catalyses N-acetyl-D-glucosamine + UDP-alpha-D-galactose = beta-D-galactosyl-(1-&gt;4)-N-acetyl-D-glucosamine + UDP + H(+). It functions in the pathway protein modification; protein glycosylation. Its function is as follows. Responsible for the synthesis of complex-type N-linked oligosaccharides in many glycoproteins as well as the carbohydrate moieties of glycolipids. Can produce lactose. In Cricetulus griseus (Chinese hamster), this protein is Beta-1,4-galactosyltransferase 2 (B4GALT2).